The primary structure comprises 243 residues: tRNA (guanine-N(1)-)-methyltransferase (243 aa).

S-adenosyl-L-methionine contacts are provided by residues G108 and 127–132 (LGDFVL).

This sequence belongs to the RNA methyltransferase TrmD family. Homodimer.

Its subcellular location is the cytoplasm. The enzyme catalyses guanosine(37) in tRNA + S-adenosyl-L-methionine = N(1)-methylguanosine(37) in tRNA + S-adenosyl-L-homocysteine + H(+). Functionally, specifically methylates guanosine-37 in various tRNAs. This chain is tRNA (guanine-N(1)-)-methyltransferase, found in Streptococcus equi subsp. equi (strain 4047).